The primary structure comprises 491 residues: MTTWDKCLKKIKKNLSTFEYKTWIKPIHVEQNSNLFTVYCNNEYFKKHIKSKYGNLILSTIQECHGNDLIIEYSNKKFSGKKITEVITAGPQANFFSTTSVEIKDESEDTKVVQEPKISKKSNTKDFSSSQELFGFDEAMLITAKEDEEYSFGLPLKEKYVFDSFVVGDANKIARAAAMQVSINPGKLHNPLFIYGGSGLGKTHLMQAIGNHAREVNPNAKIIYTNSEQFIKDYVNSIRLQDQDEFQRVYRSADILLIDDIQFIAGKEGTAQEFFHTFNALYENGKQIILTSDKYPNEIEGLEERLVSRFGYGLTVSVDMPDLETRIAILLKKAHDLGQKLPNETAAFIAENVRTNVRELEGALNRVLTTSKFNHKDPTIEVAQACLRDVIKIQEKKVKIDNIQKVVADFYRIRVKDLTSNQRSRNIARPRQIAMSLARELTSHSLPEIGNAFGGRDHTTVMHAVKAITKLRQSNTSISDDYELLLDKISR.

The interval 1-69 (MTTWDKCLKK…TIQECHGNDL (69 aa)) is domain I, interacts with DnaA modulators. Positions 69–154 (LIIEYSNKKF…KEDEEYSFGL (86 aa)) are domain II. Residues 155–371 (PLKEKYVFDS…GALNRVLTTS (217 aa)) form a domain III, AAA+ region region. ATP is bound by residues glycine 199, glycine 201, lysine 202, and threonine 203. The domain IV, binds dsDNA stretch occupies residues 372 to 491 (KFNHKDPTIE…YELLLDKISR (120 aa)).

It belongs to the DnaA family. Oligomerizes as a right-handed, spiral filament on DNA at oriC.

It is found in the cytoplasm. In terms of biological role, plays an essential role in the initiation and regulation of chromosomal replication. ATP-DnaA binds to the origin of replication (oriC) to initiate formation of the DNA replication initiation complex once per cell cycle. Binds the DnaA box (a 9 base pair repeat at the origin) and separates the double-stranded (ds)DNA. Forms a right-handed helical filament on oriC DNA; dsDNA binds to the exterior of the filament while single-stranded (ss)DNA is stabiized in the filament's interior. The ATP-DnaA-oriC complex binds and stabilizes one strand of the AT-rich DNA unwinding element (DUE), permitting loading of DNA polymerase. After initiation quickly degrades to an ADP-DnaA complex that is not apt for DNA replication. Binds acidic phospholipids. This chain is Chromosomal replication initiator protein DnaA, found in Francisella tularensis subsp. novicida (strain U112).